We begin with the raw amino-acid sequence, 188 residues long: MTEVVPRTVLYCGVCTLPPEYCEFGGAFKRCKAWLEDNDQELFAQLYSVEALTNAVQASSISAEKQEEIDRKLQKQQQKDEAKAERELLKKLASKVVIKRIERSKRKRIISVSGLEVFELDLKKLSKTFSSKFATGASVTKTADGKEEIVIQGDVGDGVEELITQMLKEKGLNQVKVEQIDEKKKKKE.

Residues 96 to 167 (VVIKRIERSK…GVEELITQML (72 aa)) enclose the SUI1 domain.

The protein belongs to the DENR family. Interacts with the 40S ribosomal subunit.

It is found in the cytoplasm. In Yarrowia lipolytica (strain CLIB 122 / E 150) (Yeast), this protein is Translation machinery-associated protein 22 (TMA22).